The following is a 230-amino-acid chain: Dephospho-CoA kinase (230 aa).

Residues 3-225 (IIGLTGGIAT…REGGAICPTP (223 aa)) form the DPCK domain. 11 to 16 (ATGKST) is an ATP binding site.

The protein belongs to the CoaE family.

Its subcellular location is the cytoplasm. The enzyme catalyses 3'-dephospho-CoA + ATP = ADP + CoA + H(+). It participates in cofactor biosynthesis; coenzyme A biosynthesis; CoA from (R)-pantothenate: step 5/5. Functionally, catalyzes the phosphorylation of the 3'-hydroxyl group of dephosphocoenzyme A to form coenzyme A. The polypeptide is Dephospho-CoA kinase (Synechococcus sp. (strain JA-3-3Ab) (Cyanobacteria bacterium Yellowstone A-Prime)).